A 160-amino-acid polypeptide reads, in one-letter code: Globin CTT-Y (160 aa).

Residues 1-16 form the signal peptide; that stretch reads MKVLAIFALCIIGALA. In terms of domain architecture, Globin spans 17-160; the sequence is TPCDDFKIMQ…IRKVINANLE (144 aa). Heme b-binding residues include His74 and His109.

Belongs to the globin family.

The protein is Globin CTT-Y (CTT-Y) of Chironomus thummi piger (Midge).